The primary structure comprises 393 residues: Stimulated by retinoic acid gene 8 protein (393 aa).

Over residues 1–11 the composition is skewed to polar residues; the sequence is MATPGEGNQPS. The disordered stretch occupies residues 1 to 25; it reads MATPGEGNQPSDDGAPQPLAQLQKL. A Nuclear localization signal (NLS) motif is present at residues 28–33; that stretch reads RVVRRR. The stretch at 66–95 forms a coiled coil; sequence QVLNRTKIHIQEQEESLDKLLKLKASFNLQ. A disordered region spans residues 124 to 201; it reads FLQDSPPEWF…EEKKVDLSHS (78 aa). Residues 141–192 show a composition bias toward acidic residues; that stretch reads DAEEEGEEEGEEEGEEGEEEEEGDEEGEEEEENGEEREVEEYQEEEEEEEEE. Positions 209–218 match the Nuclear export signal (NES) motif; sequence LMEFERYLNF.

Interacts with XPO1. Interacts with MEIOSIN. Phosphorylated in P19 EC cells. In terms of tissue distribution, expressed exclusively in premeiotic germ cells in both sexes. In females, is expressed in the embryonic ovary. In males, is expressed in pubertal and adult testes, in premeiotic spermatogenic cells. Expressed by some type A and B spermatogonia, preleptotene spermatocytes, and early leptotene spermatocytes (at protein level). Expression begins in late undifferentiated spermatogonia and persists during differentiating spermatogonia (at protein level).

The protein localises to the cytoplasm. It is found in the nucleus. Its function is as follows. Meiosis-inducer required for the transition into meiosis for both female and male germ cells. In female germ cells, acts downstream of ZGLP1 as a key effector of the meiotic program: required for premeiotic DNA replication and subsequent events in meiotic prophase. During spermatogenesis, next to its role in meiotic initiation, promotes (but is not required for) spermatogonial differentiation. In complex with MEIOSIN, directly activates the transcription of a subset of critical meiotic genes playing a central role in cell-cycle switching from mitosis to meiosis. The sequence is that of Stimulated by retinoic acid gene 8 protein from Mus musculus (Mouse).